We begin with the raw amino-acid sequence, 428 residues long: 3-phosphoshikimate 1-carboxyvinyltransferase (428 aa).

3-phosphoshikimate-binding residues include lysine 22, serine 23, and arginine 27. Phosphoenolpyruvate is bound at residue lysine 22. Glycine 94 and arginine 122 together coordinate phosphoenolpyruvate. 3-phosphoshikimate is bound by residues serine 168, serine 169, glutamine 170, serine 196, aspartate 315, and lysine 342. Residue glutamine 170 coordinates phosphoenolpyruvate. The Proton acceptor role is filled by aspartate 315. Residues arginine 346, arginine 389, and lysine 414 each contribute to the phosphoenolpyruvate site.

This sequence belongs to the EPSP synthase family. In terms of assembly, monomer.

The protein localises to the cytoplasm. The catalysed reaction is 3-phosphoshikimate + phosphoenolpyruvate = 5-O-(1-carboxyvinyl)-3-phosphoshikimate + phosphate. It participates in metabolic intermediate biosynthesis; chorismate biosynthesis; chorismate from D-erythrose 4-phosphate and phosphoenolpyruvate: step 6/7. Its function is as follows. Catalyzes the transfer of the enolpyruvyl moiety of phosphoenolpyruvate (PEP) to the 5-hydroxyl of shikimate-3-phosphate (S3P) to produce enolpyruvyl shikimate-3-phosphate and inorganic phosphate. The sequence is that of 3-phosphoshikimate 1-carboxyvinyltransferase from Thiobacillus denitrificans (strain ATCC 25259 / T1).